A 92-amino-acid chain; its full sequence is Small ribosomal subunit protein uS19 (92 aa).

It belongs to the universal ribosomal protein uS19 family.

Functionally, protein S19 forms a complex with S13 that binds strongly to the 16S ribosomal RNA. The protein is Small ribosomal subunit protein uS19 of Novosphingobium aromaticivorans (strain ATCC 700278 / DSM 12444 / CCUG 56034 / CIP 105152 / NBRC 16084 / F199).